A 267-amino-acid polypeptide reads, in one-letter code: Lectin SfL-2 (267 aa).

Tandem repeats lie at residues 1-67, 68-135, 136-202, and 203-267. The interval 1-267 is 4 X approximate tandem repeats; the sequence is GRYTVQNQWG…GPIGFKGVAN (267 aa).

As to quaternary structure, monomer.

Functionally, lectin specific for high mannose N-glycans, recognizes the branched moiety of these glycans. Does not recognize other types of N-glycans or monosaccharides. The sequence is that of Lectin SfL-2 from Solieria filiformis (Red alga).